Here is a 383-residue protein sequence, read N- to C-terminus: Adaptive-response sensory kinase SasA (383 aa).

The Histidine kinase domain maps to 152–365; the sequence is MVAHELRTPL…CFTFTVPIWQ (214 aa). Residue His-155 is modified to Phosphohistidine; by autocatalysis.

As to quaternary structure, homooligomerizes. Interacts with KaiC. Participates in the KaiABC clock complex, whose core is composed of a KaiC homohexamer, 6 KaiB and up to 6 KaiA dimers. SasA and KaiB(fs) compete to bind to KaiC.

The enzyme catalyses ATP + protein L-histidine = ADP + protein N-phospho-L-histidine.. Its function is as follows. Member of the two-component regulatory system SasA/RpaA involved in genome-wide circadian gene expression. One of several clock output pathways. Participates in the Kai clock protein complex, the main circadian regulator in cyanobacteria, via its interaction with KaiC. KaiC enhances the autophosphorylation activity of SasA, which then transfers its phosphate group to RpaA to activate it. In addition to its output function, recruits fold-shifted KaiB (KaiB(fs)) to KaiC to cooperatively form the KaiB(6):KaiC(6) complex (independent of SasA kinase activity). Required for robustness of the circadian rhythm of gene expression and is involved in clock output, also required for adaptation to light/dark cycles. The sequence is that of Adaptive-response sensory kinase SasA from Parasynechococcus marenigrum (strain WH8102).